The following is a 453-amino-acid chain: Cytochrome P450 monooxygenase PC-20 (453 aa).

A run of 2 helical transmembrane segments spans residues 5–25 (LGPF…LCVI) and 49–69 (LGVV…LFCV). C387 contacts heme.

The protein belongs to the cytochrome P450 family. The cofactor is heme.

Its subcellular location is the membrane. It participates in secondary metabolite biosynthesis. In terms of biological role, cytochrome P450 monooxygenase; part of the gene cluster that mediates the biosynthesis of the indole diterpenes penitrems. The geranylgeranyl diphosphate (GGPP) synthase penG catalyzes the first step in penitrem biosynthesis via conversion of farnesyl pyrophosphate and isopentyl pyrophosphate into geranylgeranyl pyrophosphate (GGPP). Condensation of indole-3-glycerol phosphate with GGPP by the prenyl transferase penC then forms 3-geranylgeranylindole (3-GGI). Epoxidation by the FAD-dependent monooxygenase penM leads to a epoxidized-GGI that is substrate of the terpene cyclase penB for cyclization to yield paspaline. Paspaline is subsequently converted to 13-desoxypaxilline by the cytochrome P450 monooxygenase penP, the latter being then converted to paxilline by the cytochrome P450 monooxygenase penQ. Paxilline is converted to beta-paxitriol via C-10 ketoreduction by the short-chain dehydrogenase PC-15 which can be monoprenylated at the C-20 by the indole diterpene prenyltransferase penD. A two-step elimination (acetylation and elimination) process performed by the O-acetyltransferase PC-16 and the P.simplicissimum ptmI-ortholog not yet identified in P.crustosum, leads to the production of the prenylated form of penijanthine. The FAD-linked oxidoreductase ptmO then converts the prenylated form of penijanthine into PC-M5 which is in turn transformed into PC-M4 by the aromatic dimethylallyltransferase PC-22. A series of oxidation steps involving 4 cytochrome P450 monooxygenases (PC-21, PC-05, PC-23, PC-20) and a FAD-dependent monooxygenase (PC-14) are required for the transformation of PC-M4 to penitrems A and E. Synthesis of these final products is proposed to proceed via penitrems D and C (PC-21, PC-05, PC-14) and penitrems B and F (PC-21, PC-05, PC-14, PC-23). The protein is Cytochrome P450 monooxygenase PC-20 of Penicillium crustosum (Blue mold fungus).